The primary structure comprises 520 residues: Succinyl-CoA:3-ketoacid coenzyme A transferase 2A, mitochondrial (520 aa).

The transit peptide at 1 to 39 (MAALRLLAWALPRGVSALRPPPALPHRLIRRYVSDRSGS) directs the protein to the mitochondrion. The disordered stretch occupies residues 280–299 (ERLTTRDSKPAPGSKDNDPS). Glu-342 acts as the 5-glutamyl coenzyme A thioester intermediate in catalysis.

It belongs to the 3-oxoacid CoA-transferase family. Homodimer.

It localises to the mitochondrion. The catalysed reaction is a 3-oxo acid + succinyl-CoA = a 3-oxoacyl-CoA + succinate. It functions in the pathway ketone metabolism; succinyl-CoA degradation; acetoacetyl-CoA from succinyl-CoA: step 1/1. Key enzyme for ketone body catabolism. Transfers the CoA moiety from succinate to acetoacetate. Formation of the enzyme-CoA intermediate proceeds via an unstable anhydride species formed between the carboxylate groups of the enzyme and substrate. Probably play and important roles in the energy metabolism of spermatozoa. The chain is Succinyl-CoA:3-ketoacid coenzyme A transferase 2A, mitochondrial (Oxct2a) from Mus musculus (Mouse).